An 844-amino-acid polypeptide reads, in one-letter code: RPA-related protein RADX (844 aa).

Positions 228–331 (WHNRKNFPAL…LISTMEICLN (104 aa)) form a DNA-binding region, OB. Disordered stretches follow at residues 571–609 (PASE…RPMD) and 626–664 (GPTA…TGKS). A compositionally biased stretch (polar residues) spans 572–587 (ASETLQNASPPSTSQA). The span at 590 to 608 (KEGHYHERGSKRSQDDRPM) shows a compositional bias: basic and acidic residues. The span at 652–662 (SRENSTANATG) shows a compositional bias: polar residues.

Its subcellular location is the chromosome. Its function is as follows. Single-stranded DNA-binding protein recruited to replication forks to maintain genome stability. Prevents fork collapse by antagonizing the accumulation of RAD51 at forks to ensure the proper balance of fork remodeling and protection without interfering with the capacity of cells to complete homologous recombination of double-strand breaks. The polypeptide is RPA-related protein RADX (Rattus norvegicus (Rat)).